Consider the following 877-residue polypeptide: Alanine--tRNA ligase (877 aa).

Positions 567, 571, 669, and 673 each coordinate Zn(2+).

It belongs to the class-II aminoacyl-tRNA synthetase family. Requires Zn(2+) as cofactor.

It is found in the cytoplasm. It catalyses the reaction tRNA(Ala) + L-alanine + ATP = L-alanyl-tRNA(Ala) + AMP + diphosphate. Catalyzes the attachment of alanine to tRNA(Ala) in a two-step reaction: alanine is first activated by ATP to form Ala-AMP and then transferred to the acceptor end of tRNA(Ala). Also edits incorrectly charged Ser-tRNA(Ala) and Gly-tRNA(Ala) via its editing domain. This is Alanine--tRNA ligase from Rickettsia bellii (strain RML369-C).